The primary structure comprises 98 residues: MAQGKQKFKAQRPGGAKKHQNKPKGLKKGGRIIAPKKAQVVQQQKLKKGLEVAIRNKIEHEVTQKASTSLHKKLSVLKTPAQKSGTAGAPKPAAGPSK.

The span at 1-30 shows a compositional bias: basic residues; it reads MAQGKQKFKAQRPGGAKKHQNKPKGLKKGG. Disordered regions lie at residues 1 to 38 and 63 to 98; these read MAQG…PKKA and TQKA…GPSK. Over residues 83 to 98 the composition is skewed to low complexity; that stretch reads KSGTAGAPKPAAGPSK.

This sequence belongs to the UPF0390 family.

The polypeptide is UPF0390 protein zgc136864 (Danio rerio (Zebrafish)).